The following is a 94-amino-acid chain: Co-chaperonin GroES (94 aa).

It belongs to the GroES chaperonin family. As to quaternary structure, heptamer of 7 subunits arranged in a ring. Interacts with the chaperonin GroEL.

It localises to the cytoplasm. Its function is as follows. Together with the chaperonin GroEL, plays an essential role in assisting protein folding. The GroEL-GroES system forms a nano-cage that allows encapsulation of the non-native substrate proteins and provides a physical environment optimized to promote and accelerate protein folding. GroES binds to the apical surface of the GroEL ring, thereby capping the opening of the GroEL channel. This chain is Co-chaperonin GroES, found in Tetragenococcus halophilus (Pediococcus halophilus).